A 467-amino-acid polypeptide reads, in one-letter code: MSHNNVTHGKPWSGRFHEPTDTFVEEFTASIGFDHRLYRQDIHGSIAHARMLAKVGVLSREECDAIIQGLETIAQDISRGQFSWSVALEDVHMNIEAALTERIGPVGKKLHTGRSRNDQIATDIRLYLRDAIDLITAQLQRLQEGLLAIAEREAATIMPGFTHLQTAQPVTFGHHLMAWFEMLLRDTGRLADCRHRVNVLPLGAAALAGTTFPIDRAYTAELLGFDGIAENSLDAVSDRDFAIEFTAAGALLMTHLSRFAEELVLWSSAQFDFITLPDRFCTGSSIMPQKKNPDVPELVRGKTGRVNGHLVSLLTLMKGQPLAYNKDNQEDKEPLFDTVDTLLGCLRAFADMIPAITTNPDKMREAATKGYATATDLADYLVRKGVSFRDAHEIVGKAVALAIEQSKDLAALKLATLQDFSPVIEEDVFDVLTLEGSVAARNHLGGTAPAQVRAAIQRGREKLNSLA.

Belongs to the lyase 1 family. Argininosuccinate lyase subfamily.

The protein resides in the cytoplasm. It carries out the reaction 2-(N(omega)-L-arginino)succinate = fumarate + L-arginine. Its pathway is amino-acid biosynthesis; L-arginine biosynthesis; L-arginine from L-ornithine and carbamoyl phosphate: step 3/3. This Nitrosococcus oceani (strain ATCC 19707 / BCRC 17464 / JCM 30415 / NCIMB 11848 / C-107) protein is Argininosuccinate lyase.